A 32-amino-acid chain; its full sequence is Cytochrome b6-f complex subunit 7 (32 aa).

A helical membrane pass occupies residues isoleucine 5–leucine 25.

The protein belongs to the PetM family. As to quaternary structure, the 4 large subunits of the cytochrome b6-f complex are cytochrome b6, subunit IV (17 kDa polypeptide, PetD), cytochrome f and the Rieske protein, while the 4 small subunits are PetG, PetL, PetM and PetN. The complex functions as a dimer.

It is found in the cellular thylakoid membrane. In terms of biological role, component of the cytochrome b6-f complex, which mediates electron transfer between photosystem II (PSII) and photosystem I (PSI), cyclic electron flow around PSI, and state transitions. In Prochlorococcus marinus (strain SARG / CCMP1375 / SS120), this protein is Cytochrome b6-f complex subunit 7.